The following is a 130-amino-acid chain: Small ribosomal subunit protein uS9 (130 aa).

Belongs to the universal ribosomal protein uS9 family.

The chain is Small ribosomal subunit protein uS9 from Histophilus somni (strain 129Pt) (Haemophilus somnus).